A 509-amino-acid polypeptide reads, in one-letter code: Heat shock 70 kDa protein 14 (509 aa).

The protein belongs to the heat shock protein 70 family. As to quaternary structure, component of ribosome-associated complex (RAC), a heterodimer composed of Hsp70/DnaK-type chaperone HSPA14 and Hsp40/DnaJ-type chaperone DNAJC2.

The protein resides in the cytoplasm. It localises to the cytosol. In terms of biological role, component of the ribosome-associated complex (RAC), a complex involved in folding or maintaining nascent polypeptides in a folding-competent state. In the RAC complex, binds to the nascent polypeptide chain, while DNAJC2 stimulates its ATPase activity. The chain is Heat shock 70 kDa protein 14 (Hspa14) from Rattus norvegicus (Rat).